The primary structure comprises 191 residues: Dephospho-CoA kinase (191 aa).

One can recognise a DPCK domain in the interval 3 to 191 (AIGITGSYAS…NLIANLECRV (189 aa)). Residue 11-16 (ASGKTF) coordinates ATP.

This sequence belongs to the CoaE family.

It localises to the cytoplasm. It catalyses the reaction 3'-dephospho-CoA + ATP = ADP + CoA + H(+). Its pathway is cofactor biosynthesis; coenzyme A biosynthesis; CoA from (R)-pantothenate: step 5/5. In terms of biological role, catalyzes the phosphorylation of the 3'-hydroxyl group of dephosphocoenzyme A to form coenzyme A. The protein is Dephospho-CoA kinase of Rickettsia bellii (strain RML369-C).